Here is a 316-residue protein sequence, read N- to C-terminus: Probable 5-dehydro-4-deoxyglucarate dehydratase (316 aa).

It belongs to the DapA family.

The enzyme catalyses 5-dehydro-4-deoxy-D-glucarate + H(+) = 2,5-dioxopentanoate + CO2 + H2O. The protein operates within carbohydrate acid metabolism; D-glucarate degradation; 2,5-dioxopentanoate from D-glucarate: step 2/2. The polypeptide is Probable 5-dehydro-4-deoxyglucarate dehydratase (Corynebacterium glutamicum (strain ATCC 13032 / DSM 20300 / JCM 1318 / BCRC 11384 / CCUG 27702 / LMG 3730 / NBRC 12168 / NCIMB 10025 / NRRL B-2784 / 534)).